Here is a 167-residue protein sequence, read N- to C-terminus: E1B protein, small T-antigen (167 aa).

The segment at 143–167 (GLDPVQEEEEEEENLRAGLDPSTEL) is disordered.

The protein belongs to the adenoviridae E1B 19 kDa protein family.

The protein localises to the host cell membrane. It localises to the host nucleus envelope. It is found in the host nucleus lamina. Its function is as follows. Putative adenovirus Bcl-2 homolog that inhibits apoptosis induced by TNF or FAS pathways, as well as p53-mediated apoptosis. Without E1B 19K function, virus production is compromised because of premature death of host cell. Interacts with Bax protein in cell lysates. This chain is E1B protein, small T-antigen, found in Human adenovirus F serotype 40 (HAdV-40).